Consider the following 149-residue polypeptide: 3-dehydroquinate dehydratase (149 aa).

Tyr-26 serves as the catalytic Proton acceptor. Substrate is bound by residues Asn-77, His-83, and Asp-90. His-103 (proton donor) is an active-site residue. Substrate contacts are provided by residues 104–105 and Arg-114; that span reads LS.

This sequence belongs to the type-II 3-dehydroquinase family. In terms of assembly, homododecamer.

It catalyses the reaction 3-dehydroquinate = 3-dehydroshikimate + H2O. The protein operates within metabolic intermediate biosynthesis; chorismate biosynthesis; chorismate from D-erythrose 4-phosphate and phosphoenolpyruvate: step 3/7. In terms of biological role, catalyzes a trans-dehydration via an enolate intermediate. This Psychromonas ingrahamii (strain DSM 17664 / CCUG 51855 / 37) protein is 3-dehydroquinate dehydratase.